Reading from the N-terminus, the 426-residue chain is Tryptophan--tRNA ligase (426 aa).

The short motif at P66–N74 is the 'HIGH' region element. Positions K314 to S318 match the 'KMSKS' region motif.

Belongs to the class-I aminoacyl-tRNA synthetase family.

The protein resides in the cytoplasm. The catalysed reaction is tRNA(Trp) + L-tryptophan + ATP = L-tryptophyl-tRNA(Trp) + AMP + diphosphate + H(+). In Thermoplasma acidophilum (strain ATCC 25905 / DSM 1728 / JCM 9062 / NBRC 15155 / AMRC-C165), this protein is Tryptophan--tRNA ligase.